Here is a 445-residue protein sequence, read N- to C-terminus: UPF0210 protein SSA_2018 (445 aa).

This sequence belongs to the UPF0210 family. Homodimer.

This chain is UPF0210 protein SSA_2018, found in Streptococcus sanguinis (strain SK36).